The following is a 312-amino-acid chain: Olfactory receptor 6X1 (312 aa).

The Extracellular segment spans residues 1 to 23 (MRNGTVITEFILLGFPVIQGLQT). Residue Asn3 is glycosylated (N-linked (GlcNAc...) asparagine). The chain crosses the membrane as a helical span at residues 24 to 44 (PLFIAIFLTYILTLAGNGLII). At 45–52 (ATVWAEPR) the chain is on the cytoplasmic side. The helical transmembrane segment at 53 to 73 (LQIPMYFFLCNLSFLEIWYTT) threads the bilayer. Residues 74-97 (TVIPKLLGTFVVARTVICMSCCLL) are Extracellular-facing. Cys95 and Cys187 are disulfide-bonded. The chain crosses the membrane as a helical span at residues 98 to 118 (QAFFHFFVGTTEFLILTIMSF). Over 119 to 137 (DRYLTICNPLHHPTIMTSK) the chain is Cytoplasmic. The helical transmembrane segment at 138–158 (LCLQLALSSWVVGFTIVFCQT) threads the bilayer. Over 159–195 (MLLIQLPFCGNNVISHFYCDVGPSLKAACIDTSILEL) the chain is Extracellular. A helical membrane pass occupies residues 196-215 (LGVIATILVIPGSLLFNMIS). Over 216 to 235 (YIYILSAILRIPSATGHQKT) the chain is Cytoplasmic. A helical membrane pass occupies residues 236-256 (FSTCASHLTVVSLLYGAVLFM). Topologically, residues 257 to 269 (YLRPTAHSSFKIN) are extracellular. Residues 270–290 (KVVSVLNTILTPLLNPFIYTI) traverse the membrane as a helical segment. The Cytoplasmic segment spans residues 291-312 (RNKEVKGALRKAMTCPKTGHAK).

The protein belongs to the G-protein coupled receptor 1 family.

The protein resides in the cell membrane. Functionally, odorant receptor. This Homo sapiens (Human) protein is Olfactory receptor 6X1 (OR6X1).